Reading from the N-terminus, the 103-residue chain is Large ribosomal subunit protein uL24 (103 aa).

It belongs to the universal ribosomal protein uL24 family. Part of the 50S ribosomal subunit.

In terms of biological role, one of two assembly initiator proteins, it binds directly to the 5'-end of the 23S rRNA, where it nucleates assembly of the 50S subunit. One of the proteins that surrounds the polypeptide exit tunnel on the outside of the subunit. The protein is Large ribosomal subunit protein uL24 of Treponema pallidum (strain Nichols).